The primary structure comprises 643 residues: Aspartic protease 3 (643 aa).

Positions 1–31 are cleaved as a signal peptide; the sequence is MEGRTTAGRATPAGFWLFSCCLASVLWSANA. The span at 87-99 shows a compositional bias: low complexity; it reads APEVSGAAGASAS. Residues 87–116 form a disordered region; that stretch reads APEVSGAAGASASKTSEKPIRPYHTGPSSR. A Peptidase A1 domain is found at 281-600; sequence YVGVIGIGTP…GTRPSLVGIA (320 aa). Active-site residues include D299 and D490.

The protein belongs to the peptidase A1 family.

It is found in the endomembrane system. Its activity is regulated as follows. Inhibited by 49c, a hydroxyethylamine scaffold-based compound. Required for the processing-mediated maturation of a subset of microneme proteins, such as MIC6, and rhoptry proteins, such as ROP1. By regulating microneme and rhoptry processing, plays an essential role in the lysis of the host cell membrane during egress and in rhoptry content discharge, which is required for invasion of host cells. The protein is Aspartic protease 3 of Toxoplasma gondii.